A 275-amino-acid chain; its full sequence is Arylamine N-acetyltransferase (275 aa).

C70 serves as the catalytic Acyl-thioester intermediate. Catalysis depends on residues H110 and D127.

This sequence belongs to the arylamine N-acetyltransferase family. As to quaternary structure, homodimer and homotetramer.

It carries out the reaction an arylamine + acetyl-CoA = an N-acetylarylamine + CoA. In terms of biological role, catalyzes the transfer of the acetyl group from acetyl coenzyme A to the free amino group of arylamines and hydrazines. Substrates include isoniazid, anisidine, and 4-aminoveratrole, and to a much lesser extent, p-aminobenzoic acid. This is Arylamine N-acetyltransferase from Mycolicibacterium smegmatis (Mycobacterium smegmatis).